Here is a 318-residue protein sequence, read N- to C-terminus: NAC domain-containing protein 59 (318 aa).

The NAC domain occupies 24–174 (LPPGFRFHPT…ECVISRVFHT (151 aa)). Residues 121–180 (VGMKKTLVFYKGRAPKGVKTNWVMHEYRLEGKFAIDNLSKTAKNECVISRVFHTRTDGTK) mediate DNA binding.

In terms of tissue distribution, mostly expressed in root cortex, phloem, atrichoblast and quiescent center (QC), and, to a lower extent, in root endodermis, xylem, pericycle, columella and lateral root cap (LRC). Expressed in roots, cotyledons, very young leaves, senescing leaves, mature flowers and pollen.

The protein localises to the nucleus. In terms of biological role, transcription activator that binds to DNA in promoters of target genes on a specific bipartite motif 5'-[AG]CGT[AG](4-5n)[AG][CT]ACGCAA-3'. Triggers the expression of senescence-associated genes during age-, salt- and dark-induced senescence through a regulatory network that may involve cross-talk with salt- and H(2)O(2)-dependent signaling pathways. This Arabidopsis thaliana (Mouse-ear cress) protein is NAC domain-containing protein 59.